The sequence spans 525 residues: Cytochrome P450 4V2 (525 aa).

Residues L13–L33 traverse the membrane as a helical segment. The heme site is built by E329 and C467.

This sequence belongs to the cytochrome P450 family. The cofactor is heme. As to expression, broadly expressed. Detected in heart, brain, placenta, lung, liver, skeletal muscle, kidney, pancreas, retina, retinal pigment epithelium (RPE) and lymphocytes.

The protein localises to the endoplasmic reticulum membrane. It catalyses the reaction dodecanoate + reduced [NADPH--hemoprotein reductase] + O2 = 12-hydroxydodecanoate + oxidized [NADPH--hemoprotein reductase] + H2O + H(+). The enzyme catalyses tetradecanoate + reduced [NADPH--hemoprotein reductase] + O2 = 14-hydroxytetradecanoate + oxidized [NADPH--hemoprotein reductase] + H2O + H(+). The catalysed reaction is hexadecanoate + reduced [NADPH--hemoprotein reductase] + O2 = 16-hydroxyhexadecanoate + oxidized [NADPH--hemoprotein reductase] + H2O + H(+). It carries out the reaction (5Z,8Z,11Z,14Z,17Z)-eicosapentaenoate + reduced [NADPH--hemoprotein reductase] + O2 = 20-hydroxy-(5Z,8Z,11Z,14Z,17Z)-eicosapentaenoate + oxidized [NADPH--hemoprotein reductase] + H2O + H(+). It catalyses the reaction (4Z,7Z,10Z,13Z,16Z,19Z)-docosahexaenoate + reduced [NADPH--hemoprotein reductase] + O2 = 22-hydroxy-(4Z,7Z,10Z,13Z,16Z,19Z)-docosahexaenoate + oxidized [NADPH--hemoprotein reductase] + H2O + H(+). The protein operates within lipid metabolism; fatty acid metabolism. Its activity is regulated as follows. Inhibited by N-hydroxy-N'-(4-n-butyl-2-methylphenyl formamidine)(HET0016) with an IC(50) of 38 nM. Its function is as follows. A cytochrome P450 monooxygenase involved in fatty acid metabolism in the eye. Catalyzes the omega-hydroxylation of polyunsaturated fatty acids (PUFAs) docosahexaenoate (DHA) and its precursor eicosapentaenoate (EPA), and may contribute to the homeostasis of these retinal PUFAs. Omega hydroxylates saturated fatty acids such as laurate, myristate and palmitate, the catalytic efficiency decreasing in the following order: myristate &gt; laurate &gt; palmitate (C14&gt;C12&gt;C16). Mechanistically, uses molecular oxygen inserting one oxygen atom into a substrate, and reducing the second into a water molecule, with two electrons provided by NADPH via cytochrome P450 reductase (CPR; NADPH-ferrihemoprotein reductase). The polypeptide is Cytochrome P450 4V2 (CYP4V2) (Homo sapiens (Human)).